The primary structure comprises 349 residues: Succinylglutamate desuccinylase (349 aa).

The Zn(2+) site is built by His70, Glu73, and His166. The active site involves Glu229.

This sequence belongs to the AspA/AstE family. Succinylglutamate desuccinylase subfamily. The cofactor is Zn(2+).

It catalyses the reaction N-succinyl-L-glutamate + H2O = L-glutamate + succinate. It functions in the pathway amino-acid degradation; L-arginine degradation via AST pathway; L-glutamate and succinate from L-arginine: step 5/5. In terms of biological role, transforms N(2)-succinylglutamate into succinate and glutamate. This Burkholderia thailandensis (strain ATCC 700388 / DSM 13276 / CCUG 48851 / CIP 106301 / E264) protein is Succinylglutamate desuccinylase.